Here is a 156-residue protein sequence, read N- to C-terminus: Small ribosomal subunit protein uS7 (156 aa).

The protein belongs to the universal ribosomal protein uS7 family. As to quaternary structure, part of the 30S ribosomal subunit. Contacts proteins S9 and S11.

In terms of biological role, one of the primary rRNA binding proteins, it binds directly to 16S rRNA where it nucleates assembly of the head domain of the 30S subunit. Is located at the subunit interface close to the decoding center, probably blocks exit of the E-site tRNA. In Prochlorococcus marinus (strain MIT 9211), this protein is Small ribosomal subunit protein uS7.